Here is a 206-residue protein sequence, read N- to C-terminus: MTPQPRRRLVLASQSPARLGLLRQAGLAPEVLVSGVDEEAVTAPTPAELALALAEAKASVVAAKPEVHGALVIGCDSVLDLDGQALGKPADAEEATARWKAMRGRAGTLQTGHCVWDTASGRHVSATASTVVRFGEPTDDEIAAYVASGEPLHVAGAFTLDGRSAPFIDGIDGDHGNVIGLSLPLLRRLLADLGTGITELWAPAED.

The active-site Proton acceptor is the Asp-76.

It belongs to the Maf family. A divalent metal cation is required as a cofactor.

Its subcellular location is the cytoplasm. It catalyses the reaction a ribonucleoside 5'-triphosphate + H2O = a ribonucleoside 5'-phosphate + diphosphate + H(+). The enzyme catalyses a 2'-deoxyribonucleoside 5'-triphosphate + H2O = a 2'-deoxyribonucleoside 5'-phosphate + diphosphate + H(+). Nucleoside triphosphate pyrophosphatase. May have a dual role in cell division arrest and in preventing the incorporation of modified nucleotides into cellular nucleic acids. This is Nucleoside triphosphate pyrophosphatase from Streptomyces coelicolor (strain ATCC BAA-471 / A3(2) / M145).